The primary structure comprises 348 residues: Dihydroorotase (348 aa).

Zn(2+) contacts are provided by H17 and H19. Residues 19-21 (HLR) and N45 each bind substrate. 3 residues coordinate Zn(2+): K103, H140, and H178. K103 carries the N6-carboxylysine modification. Position 140 (H140) interacts with substrate. L223 serves as a coordination point for substrate. Zn(2+) is bound at residue D251. D251 is an active-site residue. Substrate contacts are provided by H255 and A267.

The protein belongs to the metallo-dependent hydrolases superfamily. DHOase family. Class II DHOase subfamily. As to quaternary structure, homodimer. Requires Zn(2+) as cofactor.

It carries out the reaction (S)-dihydroorotate + H2O = N-carbamoyl-L-aspartate + H(+). Its pathway is pyrimidine metabolism; UMP biosynthesis via de novo pathway; (S)-dihydroorotate from bicarbonate: step 3/3. Its function is as follows. Catalyzes the reversible cyclization of carbamoyl aspartate to dihydroorotate. This Salmonella heidelberg (strain SL476) protein is Dihydroorotase.